A 458-amino-acid polypeptide reads, in one-letter code: ATP synthase subunit beta (458 aa).

Residue 148–155 (GGAGVGKT) coordinates ATP.

This sequence belongs to the ATPase alpha/beta chains family. As to quaternary structure, F-type ATPases have 2 components, CF(1) - the catalytic core - and CF(0) - the membrane proton channel. CF(1) has five subunits: alpha(3), beta(3), gamma(1), delta(1), epsilon(1). CF(0) has three main subunits: a(1), b(2) and c(9-12). The alpha and beta chains form an alternating ring which encloses part of the gamma chain. CF(1) is attached to CF(0) by a central stalk formed by the gamma and epsilon chains, while a peripheral stalk is formed by the delta and b chains.

It is found in the cell inner membrane. The catalysed reaction is ATP + H2O + 4 H(+)(in) = ADP + phosphate + 5 H(+)(out). Produces ATP from ADP in the presence of a proton gradient across the membrane. The catalytic sites are hosted primarily by the beta subunits. The protein is ATP synthase subunit beta of Shewanella loihica (strain ATCC BAA-1088 / PV-4).